We begin with the raw amino-acid sequence, 218 residues long: Phosphoglycolate phosphatase (218 aa).

The active-site Nucleophile is Asp7. Residues Asp7, Asp9, and Asp167 each contribute to the Mg(2+) site.

This sequence belongs to the HAD-like hydrolase superfamily. CbbY/CbbZ/Gph/YieH family. It depends on Mg(2+) as a cofactor.

It catalyses the reaction 2-phosphoglycolate + H2O = glycolate + phosphate. The protein operates within organic acid metabolism; glycolate biosynthesis; glycolate from 2-phosphoglycolate: step 1/1. Its function is as follows. Specifically catalyzes the dephosphorylation of 2-phosphoglycolate. Is involved in the dissimilation of the intracellular 2-phosphoglycolate formed during the DNA repair of 3'-phosphoglycolate ends, a major class of DNA lesions induced by oxidative stress. This is Phosphoglycolate phosphatase from Cereibacter sphaeroides (strain ATCC 17025 / ATH 2.4.3) (Rhodobacter sphaeroides).